Reading from the N-terminus, the 446-residue chain is Minor teichoic acid biosynthesis protein GgaA (446 aa).

Belongs to the glycosyltransferase 2 family.

Its pathway is cell wall biogenesis; poly(glucopyranosyl N-acetylgalactosamine 1-phosphate) teichoic acid biosynthesis. Involved in the biosynthesis of galactosamine-containing minor teichoic acid, a non-essential cell wall polymer in B.subtilis 168. This chain is Minor teichoic acid biosynthesis protein GgaA (ggaA), found in Bacillus subtilis (strain 168).